Consider the following 156-residue polypeptide: Proline dehydrogenase transcriptional activator (156 aa).

The 62-residue stretch at 10–71 (LDHFDLKILE…VLNPQKLGVD (62 aa)) folds into the HTH asnC-type domain. A DNA-binding region (H-T-H motif) is located at residues 29–48 (VLQLSKRVGLSKTPCQTRLK).

Transcriptional activator of the putA gene in response to proline. This is Proline dehydrogenase transcriptional activator (putR) from Rhizobium radiobacter (Agrobacterium tumefaciens).